A 426-amino-acid polypeptide reads, in one-letter code: MLTIKDIHALEVMDSRGNPTIQASVILSDNTKASAIVSSGASTGKREALELRDNDKTRFLGKGVLRACENVNTVIKHNLIGLEAINQAFVDGRLKALDGTPNYANLGANASLGVSMALARASAKALNMPLYRYLGGANALTLPVPMLNIINGGSHANNSIDFQEYMIMPLGFESFKEALRASAEVYHTLKKLLDEKNQLTSVGDEGGFAPNFKNNVEPLEVISQAIEKAGYKLGEEIALALDVASSELVDEHFNYHLKGENKILNAQELVAYYKELVAKYPIVSIEDGLSEDDWEGWAFLSKELGRQIQLVGDDLFVTNASILQKGIKKNIANAILIKPNQIGTISETLETIRLAKHHAYQCVMSHRSGESEDSFIADFAVALNTGEIKTGSTARSERIAKYNRLLEIEHELKGGIYIGKELFKHG.

Position 163 (Gln163) interacts with (2R)-2-phosphoglycerate. The active-site Proton donor is the Glu205. Residues Asp242, Glu286, and Asp313 each contribute to the Mg(2+) site. The (2R)-2-phosphoglycerate site is built by Lys338, Arg367, Ser368, and Lys389. Residue Lys338 is the Proton acceptor of the active site.

This sequence belongs to the enolase family. The cofactor is Mg(2+).

The protein localises to the cytoplasm. It is found in the secreted. It localises to the cell surface. It catalyses the reaction (2R)-2-phosphoglycerate = phosphoenolpyruvate + H2O. Its pathway is carbohydrate degradation; glycolysis; pyruvate from D-glyceraldehyde 3-phosphate: step 4/5. Functionally, catalyzes the reversible conversion of 2-phosphoglycerate (2-PG) into phosphoenolpyruvate (PEP). It is essential for the degradation of carbohydrates via glycolysis. The sequence is that of Enolase from Helicobacter acinonychis (strain Sheeba).